The following is a 145-amino-acid chain: D-aminoacyl-tRNA deacylase (145 aa).

A Gly-cisPro motif, important for rejection of L-amino acids motif is present at residues 137–138 (GP).

This sequence belongs to the DTD family. As to quaternary structure, homodimer.

The protein localises to the cytoplasm. It catalyses the reaction glycyl-tRNA(Ala) + H2O = tRNA(Ala) + glycine + H(+). The catalysed reaction is a D-aminoacyl-tRNA + H2O = a tRNA + a D-alpha-amino acid + H(+). Its function is as follows. An aminoacyl-tRNA editing enzyme that deacylates mischarged D-aminoacyl-tRNAs. Also deacylates mischarged glycyl-tRNA(Ala), protecting cells against glycine mischarging by AlaRS. Acts via tRNA-based rather than protein-based catalysis; rejects L-amino acids rather than detecting D-amino acids in the active site. By recycling D-aminoacyl-tRNA to D-amino acids and free tRNA molecules, this enzyme counteracts the toxicity associated with the formation of D-aminoacyl-tRNA entities in vivo and helps enforce protein L-homochirality. The chain is D-aminoacyl-tRNA deacylase from Ectopseudomonas mendocina (strain ymp) (Pseudomonas mendocina).